A 56-amino-acid chain; its full sequence is Large ribosomal subunit protein bL33 (56 aa).

It belongs to the bacterial ribosomal protein bL33 family.

The polypeptide is Large ribosomal subunit protein bL33 (Marinomonas sp. (strain MWYL1)).